A 307-amino-acid chain; its full sequence is Haloalkane dehalogenase (307 aa).

Residues 34–158 (PVLFLHGNPT…FQAFRTADVG (125 aa)) enclose the AB hydrolase-1 domain. Residue D106 is the Nucleophile of the active site. Residue E130 is the Proton donor of the active site. H272 acts as the Proton acceptor in catalysis.

Belongs to the haloalkane dehalogenase family. Type 2 subfamily. As to quaternary structure, monomer.

The enzyme catalyses 1-haloalkane + H2O = a halide anion + a primary alcohol + H(+). It functions in the pathway xenobiotic degradation; 1,2-dibromoethane degradation. In terms of biological role, catalyzes hydrolytic cleavage of carbon-halogen bonds in halogenated aliphatic compounds, leading to the formation of the corresponding primary alcohols, halide ions and protons. Has a broad substrate specificity, which includes mono- and di-chlorinated and brominated alkanes. The highest activity was found with 1,2-dibromoethane, whereas low activity was measured with the analog 1,2-dichloroethane. The sequence is that of Haloalkane dehalogenase (dhaAF) from Mycobacterium sp. (strain GP1).